A 252-amino-acid chain; its full sequence is Chitooligosaccharide deacetylase (252 aa).

The Mg(2+) site is built by H61 and H125.

Belongs to the YdjC deacetylase family. ChbG subfamily. Homodimer. The cofactor is Mg(2+).

It is found in the cytoplasm. The enzyme catalyses N,N'-diacetylchitobiose + H2O = N-acetyl-beta-D-glucosaminyl-(1-&gt;4)-D-glucosamine + acetate. It catalyses the reaction diacetylchitobiose-6'-phosphate + H2O = N'-monoacetylchitobiose-6'-phosphate + acetate. Its pathway is glycan degradation; chitin degradation. Its function is as follows. Involved in the degradation of chitin. ChbG is essential for growth on the acetylated chitooligosaccharides chitobiose and chitotriose but is dispensable for growth on cellobiose and chitosan dimer, the deacetylated form of chitobiose. Deacetylation of chitobiose-6-P and chitotriose-6-P is necessary for both the activation of the chb promoter by the regulatory protein ChbR and the hydrolysis of phosphorylated beta-glucosides by the phospho-beta-glucosidase ChbF. Catalyzes the removal of only one acetyl group from chitobiose-6-P to yield monoacetylchitobiose-6-P, the inducer of ChbR and the substrate of ChbF. This Citrobacter koseri (strain ATCC BAA-895 / CDC 4225-83 / SGSC4696) protein is Chitooligosaccharide deacetylase.